Consider the following 803-residue polypeptide: Volume-regulated anion channel subunit LRRC8C (803 aa).

Residues 1 to 22 (MIPVTEFRQFSEQQPAFRVLKP) are Cytoplasmic-facing. A helical membrane pass occupies residues 23-43 (WWDVFTDYLSVAMLMIGVFGC). Over 44 to 125 (TLQVMQDKII…YERALHWYAK (82 aa)) the chain is Extracellular. Intrachain disulfides connect cysteine 54-cysteine 308 and cysteine 115-cysteine 293. N-linked (GlcNAc...) asparagine glycosylation is found at asparagine 64 and asparagine 70. Residues 126-146 (YFPYLVLIHTLVFMLCSNFWF) traverse the membrane as a helical segment. The Cytoplasmic segment spans residues 147–266 (KFPGSSSKIE…ILYAMYVRQT (120 aa)). A disordered region spans residues 177–211 (EVSGEDSEEKDNRKNNMNRSNTIQSGPEGSLVKSQ). The span at 191 to 211 (NNMNRSNTIQSGPEGSLVKSQ) shows a compositional bias: polar residues. Residues serine 212 and serine 215 each carry the phosphoserine modification. The helical transmembrane segment at 267–287 (VLKVIKFLIIIAYNSALVSKV) threads the bilayer. The Extracellular segment spans residues 288–320 (QFTVDCNVDIQDMTGYKNFSCNHTMAHLFSKLS). A helical transmembrane segment spans residues 321–341 (FCYLCFVSIYGLTCLYTLYWL). Residues 342 to 803 (FYRSLREYSF…SDVREQMKAD (462 aa)) lie on the Cytoplasmic side of the membrane. LRR repeat units lie at residues 397–420 (ENKL…KLQT), 421–443 (NAHN…VFEI), 446–466 (LQSL…IAQL), 467–488 (DNLQ…ALSF), 490–513 (KENL…MYGL), 515–537 (NLEE…TLES), 541–563 (LKSL…VVDV), 565–587 (SHLQ…NLKK), 588–611 (MTNL…VFSL), 613–635 (SLQE…SFQH), 637–659 (RKLT…IKKL), 660–682 (TSLE…LFLC), 684–705 (KIRY…IGVL), 706–728 (QSLQ…LYFC), 730–751 (KLKT…IGNL), 752–774 (LFLS…LGDC), and 776–799 (ALKR…VREQ).

The protein belongs to the LRRC8 family. As to quaternary structure, heterohexamer; oligomerizes with other LRRC8 proteins (LRRC8A, LRRC8B, LRRC8D and/or LRRC8E) to form a heterohexamer. Homoheptamer; inactive, likely because it is not targeted to the plasma membrane in the absence of LRRC8A. In vivo, the subunit composition may depend primarily on expression levels, and heterooligomeric channels containing various proportions of the different LRRC8 proteins may coexist.

Its subcellular location is the cell membrane. It is found in the endoplasmic reticulum membrane. It catalyses the reaction chloride(in) = chloride(out). It carries out the reaction iodide(out) = iodide(in). The catalysed reaction is taurine(out) = taurine(in). The enzyme catalyses 2',3'-cGAMP(out) = 2',3'-cGAMP(in). In terms of biological role, non-essential component of the volume-regulated anion channel (VRAC, also named VSOAC channel), an anion channel required to maintain a constant cell volume in response to extracellular or intracellular osmotic changes. The VRAC channel conducts iodide better than chloride and can also conduct organic osmolytes like taurine. Plays a redundant role in the efflux of amino acids, such as aspartate and glutamate, in response to osmotic stress. The VRAC channel also mediates transport of immunoreactive cyclic dinucleotide GMP-AMP (2'-3'-cGAMP), an immune messenger produced in response to DNA virus in the cytosol. Channel activity requires LRRC8A plus at least one other family member (LRRC8B, LRRC8C, LRRC8D or LRRC8E); channel characteristics depend on the precise subunit composition. This is Volume-regulated anion channel subunit LRRC8C from Rattus norvegicus (Rat).